We begin with the raw amino-acid sequence, 220 residues long: MTSHQTGKIEVHWNDPSSGIFLSQTQRTSSTSSLKKSASSRRLVYGDDMLAPKPLAGQVLSKSPLPPFSPSKIMNRSISVPPTNISVPQISSNPLNLMKKSSDNDIFTTFNDTTNDCMNEASCEDVRHSLLQIIESKSNLSDSVHKMLGERVKTNLLLQGQLENMEGFWLQKLSQTCRLALTGNISEAKAFIVEIMCAGVVTNCVRWCPVLKTLIENLAI.

This is an uncharacterized protein from Schizosaccharomyces pombe (strain 972 / ATCC 24843) (Fission yeast).